The following is a 642-amino-acid chain: Influenza virus NS1A-binding protein (642 aa).

The BTB domain occupies 1-131; the sequence is MIPNGYLMFE…GDYLLSRMDV (131 aa). The 219-residue stretch at 132–350 folds into the BACK domain; the sequence is TSCISYRNFA…MQQDELIEKP (219 aa). The interval 164 to 368 is sufficient for AHR interaction and signaling; sequence ISEEEEFLKL…SGLGTAEMNG (205 aa). 5 positions are modified to phosphoserine: serine 246, serine 277, serine 322, serine 336, and serine 338. Positions 257–281 are disordered; that stretch reads KPPRENGHKQISSSSTGCLSSPNAT. Positions 265 to 281 are enriched in polar residues; the sequence is KQISSSSTGCLSSPNAT. Kelch repeat units follow at residues 384–421, 432–469, 481–518, 527–565, 575–612, and 622–642; these read TVECYNPHTDHWSFLAPMRTPRARFQMAVLMGQLYVVG, CGEMYDSNIDDWIPVPELRTNRCNAGVCALNGKLYIVG, NCDVFDPVTKLWTSCAPLNIRRHQSAVCELGGYLYIIG, NTVERYNPENNTWTLIAPMNVARRGAGVAVLNGKLFVCG, CVEMYDPTRNEWKMMGNMTSPRSNAGIATVGNTIYAVG, and TVEVYNLESNEWSPYTKIFQF.

This sequence belongs to the BTB-kelch protein family. In terms of assembly, homodimer; through the BTB domain. Interacts with AHR/Aryl hydrocarbon receptor. Interacts (via BACK domain) with pre-mRNA-binding protein HNRNPK; the interaction is direct. Interacts (via BACK domain) with splicing factor PTBP1; the interaction is direct. Interacts (via Kelch repeats) with RNA polymerase POLR2A (via C-terminal domain). Interacts (via BACK domain) with splicing factor SNRPA; the interaction is indirect. Interacts (via Kelch repeats) with splicing factor SART1. Interacts (via BACK domain) with ALYREF; the interaction is indirect and likely plays a role in mRNA nuclear export. Interacts (via Kelch repeats) with KLHL20 (via Kelch repeats); this interaction blocks the assembly of Cul3-KLHL20 complex. (Microbial infection) Interacts (via BACK domain) with influenza A virus non-structural protein 1 (NS1); the interaction is direct and bridges the interaction between NS1 and HNRNPK.

The protein localises to the cytoplasm. It localises to the cytoskeleton. It is found in the nucleus. Its subcellular location is the nucleoplasm. Involved in many cell functions, including pre-mRNA splicing, the aryl hydrocarbon receptor (AHR) pathway, F-actin organization and protein ubiquitination. Plays a role in the dynamic organization of the actin skeleton as a stabilizer of actin filaments by association with F-actin through Kelch repeats. Protects cells from cell death induced by actin destabilization. Functions as modifier of the AHR/Aryl hydrocarbon receptor pathway increasing the concentration of AHR available to activate transcription. In addition, functions as a negative regulator of BCR(KLHL20) E3 ubiquitin ligase complex to prevent ubiquitin-mediated proteolysis of PML and DAPK1, two tumor suppressors. Inhibits pre-mRNA splicing (in vitro). May play a role in mRNA nuclear export. Its function is as follows. (Microbial infection) Involved in the alternative splicing of influenza A virus M1 mRNA through interaction with HNRNPK, thereby facilitating the generation of viral M2 protein. The BTB and Kelch domains are required for splicing activity. Promotes export of viral M mRNA and RNP via its interaction with mRNA export factor ALYREF. The chain is Influenza virus NS1A-binding protein from Homo sapiens (Human).